Here is a 65-residue protein sequence, read N- to C-terminus: MGKLRVTYVKSAIGYARDQKETLAALGLRRLNQSVLKPDNPSVRGMLFKVQHLVKVEEVEDEVQA.

It belongs to the universal ribosomal protein uL30 family. In terms of assembly, part of the 50S ribosomal subunit.

The chain is Large ribosomal subunit protein uL30 from Chloroflexus aurantiacus (strain ATCC 29366 / DSM 635 / J-10-fl).